The chain runs to 427 residues: 3-phosphoshikimate 1-carboxyvinyltransferase (427 aa).

Positions 22, 23, and 27 each coordinate 3-phosphoshikimate. Residue Lys22 participates in phosphoenolpyruvate binding. 2 residues coordinate phosphoenolpyruvate: Gly96 and Arg124. Positions 169, 170, 171, 197, 313, 336, and 340 each coordinate 3-phosphoshikimate. Residue Gln171 participates in phosphoenolpyruvate binding. The Proton acceptor role is filled by Asp313. Residues Arg344, Arg386, and Lys411 each coordinate phosphoenolpyruvate.

This sequence belongs to the EPSP synthase family. Monomer.

The protein localises to the cytoplasm. It carries out the reaction 3-phosphoshikimate + phosphoenolpyruvate = 5-O-(1-carboxyvinyl)-3-phosphoshikimate + phosphate. It participates in metabolic intermediate biosynthesis; chorismate biosynthesis; chorismate from D-erythrose 4-phosphate and phosphoenolpyruvate: step 6/7. Its function is as follows. Catalyzes the transfer of the enolpyruvyl moiety of phosphoenolpyruvate (PEP) to the 5-hydroxyl of shikimate-3-phosphate (S3P) to produce enolpyruvyl shikimate-3-phosphate and inorganic phosphate. The polypeptide is 3-phosphoshikimate 1-carboxyvinyltransferase (Salmonella choleraesuis (strain SC-B67)).